Here is a 107-residue protein sequence, read N- to C-terminus: Large ribosomal subunit protein eL33A (107 aa).

An N-acetylalanine; partial modification is found at A2. Residue K47 forms a Glycyl lysine isopeptide (Lys-Gly) (interchain with G-Cter in ubiquitin) linkage.

This sequence belongs to the eukaryotic ribosomal protein eL33 family. Component of the large ribosomal subunit (LSU). Mature yeast ribosomes consist of a small (40S) and a large (60S) subunit. The 40S small subunit contains 1 molecule of ribosomal RNA (18S rRNA) and 33 different proteins (encoded by 57 genes). The large 60S subunit contains 3 rRNA molecules (25S, 5.8S and 5S rRNA) and 46 different proteins (encoded by 81 genes). In terms of processing, N-terminally acetylated by acetyltransferase NatA.

The protein resides in the cytoplasm. Functionally, component of the ribosome, a large ribonucleoprotein complex responsible for the synthesis of proteins in the cell. The small ribosomal subunit (SSU) binds messenger RNAs (mRNAs) and translates the encoded message by selecting cognate aminoacyl-transfer RNA (tRNA) molecules. The large subunit (LSU) contains the ribosomal catalytic site termed the peptidyl transferase center (PTC), which catalyzes the formation of peptide bonds, thereby polymerizing the amino acids delivered by tRNAs into a polypeptide chain. The nascent polypeptides leave the ribosome through a tunnel in the LSU and interact with protein factors that function in enzymatic processing, targeting, and the membrane insertion of nascent chains at the exit of the ribosomal tunnel. This Saccharomyces cerevisiae (strain ATCC 204508 / S288c) (Baker's yeast) protein is Large ribosomal subunit protein eL33A.